The sequence spans 80 residues: Small ribosomal subunit protein bS18A (80 aa).

The protein belongs to the bacterial ribosomal protein bS18 family. In terms of assembly, part of the 30S ribosomal subunit. Forms a tight heterodimer with protein bS6.

Binds as a heterodimer with protein bS6 to the central domain of the 16S rRNA, where it helps stabilize the platform of the 30S subunit. The polypeptide is Small ribosomal subunit protein bS18A (Rhodococcus jostii (strain RHA1)).